The chain runs to 415 residues: Multifunctional CCA protein (415 aa).

ATP contacts are provided by G8 and R11. Residues G8 and R11 each contribute to the CTP site. Residues E21 and D23 each coordinate Mg(2+). Positions 91, 137, and 140 each coordinate ATP. R91, R137, and R140 together coordinate CTP. The HD domain maps to 228–329 (AGTHTLMALD…VELFEGLDLF (102 aa)).

It belongs to the tRNA nucleotidyltransferase/poly(A) polymerase family. Bacterial CCA-adding enzyme type 1 subfamily. Monomer. Can also form homodimers and oligomers. It depends on Mg(2+) as a cofactor. Ni(2+) serves as cofactor.

The enzyme catalyses a tRNA precursor + 2 CTP + ATP = a tRNA with a 3' CCA end + 3 diphosphate. It catalyses the reaction a tRNA with a 3' CCA end + 2 CTP + ATP = a tRNA with a 3' CCACCA end + 3 diphosphate. Its function is as follows. Catalyzes the addition and repair of the essential 3'-terminal CCA sequence in tRNAs without using a nucleic acid template. Adds these three nucleotides in the order of C, C, and A to the tRNA nucleotide-73, using CTP and ATP as substrates and producing inorganic pyrophosphate. tRNA 3'-terminal CCA addition is required both for tRNA processing and repair. Also involved in tRNA surveillance by mediating tandem CCA addition to generate a CCACCA at the 3' terminus of unstable tRNAs. While stable tRNAs receive only 3'-terminal CCA, unstable tRNAs are marked with CCACCA and rapidly degraded. This chain is Multifunctional CCA protein, found in Halorhodospira halophila (strain DSM 244 / SL1) (Ectothiorhodospira halophila (strain DSM 244 / SL1)).